A 429-amino-acid polypeptide reads, in one-letter code: Bifunctional protein GlmU (429 aa).

The segment at 1–223 is pyrophosphorylase; the sequence is MKTSILILAA…EDEFMGINDK (223 aa). UDP-N-acetyl-alpha-D-glucosamine is bound by residues 8–11, K22, and 81–82; these read LAAG and GT. Residue D102 participates in Mg(2+) binding. Positions 135, 149, 164, and 221 each coordinate UDP-N-acetyl-alpha-D-glucosamine. N221 lines the Mg(2+) pocket. The interval 224–244 is linker; sequence FELSIAENFMQEKIKKYWMQQ. Positions 245 to 429 are N-acetyltransferase; it reads GVIFHLPQST…KDYYYKKFQK (185 aa). R308 and K325 together coordinate UDP-N-acetyl-alpha-D-glucosamine. Residue H336 is the Proton acceptor of the active site. Residues Y339 and N350 each contribute to the UDP-N-acetyl-alpha-D-glucosamine site. Residues 359–360, S378, A396, and R413 each bind acetyl-CoA; that span reads NY.

It in the N-terminal section; belongs to the N-acetylglucosamine-1-phosphate uridyltransferase family. In the C-terminal section; belongs to the transferase hexapeptide repeat family. Homotrimer. The cofactor is Mg(2+).

The protein resides in the cytoplasm. It carries out the reaction alpha-D-glucosamine 1-phosphate + acetyl-CoA = N-acetyl-alpha-D-glucosamine 1-phosphate + CoA + H(+). It catalyses the reaction N-acetyl-alpha-D-glucosamine 1-phosphate + UTP + H(+) = UDP-N-acetyl-alpha-D-glucosamine + diphosphate. The protein operates within nucleotide-sugar biosynthesis; UDP-N-acetyl-alpha-D-glucosamine biosynthesis; N-acetyl-alpha-D-glucosamine 1-phosphate from alpha-D-glucosamine 6-phosphate (route II): step 2/2. It functions in the pathway nucleotide-sugar biosynthesis; UDP-N-acetyl-alpha-D-glucosamine biosynthesis; UDP-N-acetyl-alpha-D-glucosamine from N-acetyl-alpha-D-glucosamine 1-phosphate: step 1/1. Its pathway is bacterial outer membrane biogenesis; LPS lipid A biosynthesis. Functionally, catalyzes the last two sequential reactions in the de novo biosynthetic pathway for UDP-N-acetylglucosamine (UDP-GlcNAc). The C-terminal domain catalyzes the transfer of acetyl group from acetyl coenzyme A to glucosamine-1-phosphate (GlcN-1-P) to produce N-acetylglucosamine-1-phosphate (GlcNAc-1-P), which is converted into UDP-GlcNAc by the transfer of uridine 5-monophosphate (from uridine 5-triphosphate), a reaction catalyzed by the N-terminal domain. The chain is Bifunctional protein GlmU from Campylobacter jejuni (strain RM1221).